The sequence spans 122 residues: N(2)-fixation sustaining protein CowN (122 aa).

Belongs to the CowN family.

Its function is as follows. Is required to sustain N(2)-dependent growth in the presence of low levels of carbon monoxide (CO). Probably acts by protecting the N(2) fixation ability of the nitrogenase complex, which is inactivated in the presence of CO. This is N(2)-fixation sustaining protein CowN from Azorhizobium caulinodans (strain ATCC 43989 / DSM 5975 / JCM 20966 / LMG 6465 / NBRC 14845 / NCIMB 13405 / ORS 571).